The sequence spans 252 residues: CLAVATA3/ESR (CLE)-related protein 4A-1 (252 aa).

The signal sequence occupies residues 1–21 (MAKNAMLCLLILRVVLALAFA). The required for secretion from the host cytoplasm to the host apoplasm stretch occupies residues 21–83 (ATNKKGDEEP…SNQLPNNNWM (63 aa)). The N-linked (GlcNAc...) asparagine glycan is linked to Asn32. The tract at residues 116-252 (RKTGMHSQRH…APAGPDPIHH (137 aa)) is disordered. 2 stretches are compositionally biased toward basic and acidic residues: residues 125 to 137 (HHEETTLEQEKRV) and 144 to 242 (PIHH…EKRG). One copy of the A-1 repeat lies at 127–135 (EETTLEQEK). The tract at residues 127–219 (EETTLEQEKR…HEETTLEQEK (93 aa)) is 6 X approximate repeat A. The CLE-1 repeat unit spans residues 136–147 (RVAGAGPDPIHH). Positions 136-252 (RVAGAGPDPI…APAGPDPIHH (117 aa)) are 6 X approximate repeat CLE. An A-2 repeat occupies 148-156 (QDTTLEQEK). The CLE-2 repeat unit spans residues 157-168 (RAVPAGPDPKHH). One copy of the A-3 repeat lies at 169–177 (EETTLEQEK). The CLE-3 repeat unit spans residues 178 to 189 (RAVPAGPDPKHH). The A-4 repeat unit spans residues 190 to 198 (EETTLEQEK). Residues 199 to 210 (RAVPAGPDPKHH) form a CLE-4 repeat. The A-5 repeat unit spans residues 211–219 (EETTLEQEK). The CLE-5 repeat unit spans residues 220-231 (RAVPAGPDPKHH). The A-6 repeat unit spans residues 232–240 (EETTFEQEK). The stretch at 241–252 (RGAPAGPDPIHH) is one CLE-6 repeat.

Belongs to the CLV3/ESR signal peptide family. Highly expressed exclusively within the dorsal esophageal gland cell during syncytium formation in host plants.

It localises to the secreted. It is found in the host cytoplasm. The protein resides in the host extracellular space. Its subcellular location is the extracellular space. The protein localises to the apoplast. Mimics host plant CLE extracellular signal peptides that regulate cell fate. May play a role in the differentiation or division of feeding cells (syncytia) induced in plant roots during infection. The chain is CLAVATA3/ESR (CLE)-related protein 4A-1 (CLE-4A-1) from Globodera rostochiensis (Golden nematode worm).